The primary structure comprises 239 residues: Probable transcriptional regulatory protein BPUM_0743 (239 aa).

It belongs to the TACO1 family. YeeN subfamily.

Its subcellular location is the cytoplasm. The chain is Probable transcriptional regulatory protein BPUM_0743 from Bacillus pumilus (strain SAFR-032).